Reading from the N-terminus, the 359-residue chain is Probable F-box protein At3g61730 (359 aa).

2 stretches are compositionally biased toward basic and acidic residues: residues 1–14 (MKTR…DSRG) and 37–48 (QKNDIQREEDGR). A disordered region spans residues 1–60 (MKTRSSDAEGDSRGKMIAPVGEGNGGRKRKLVQSNEQKNDIQREEDGRAKRRIVQSSDQK). In terms of domain architecture, F-box; degenerate spans 82 to 128 (QSRFSWYEQDIWTYISRFLDGKSLVKLGATNKWFYKIAMEDTVWRFA).

In terms of assembly, interacts with SKP1A. Expressed in flower buds, developing anthers, pollen grains, siliques, rosette leaves and roots. Detected at lower levels in open flowers, stems and cauline leaves. Expressed in young seedling in the hydathodes, shoot apical meristem, root tips and lateral root primordia.

The protein localises to the nucleus. In terms of biological role, regulates tapetum degeneration and pollen maturation during anther development. The chain is Probable F-box protein At3g61730 (RMF) from Arabidopsis thaliana (Mouse-ear cress).